The following is a 592-amino-acid chain: MRQFTHGTLLAILALANTISAIPSFSANNYPAHPAEPLALFAQSQPQAPLGLWTRLRNSVIERLWGVPPQQRNHRGGNKQYPFYSAPASLQARYSDDVVLRFRLQTADEVKALVEASNILFLDVWASTDEWVDIRLAKDVVPSLLGLLPKSLQTAHVPLIHDLPQTVYESYPSSSQRPTDNGRGFLPSRESSSDVTNIFFEDYQPLSVIGPWMRLLASMFPSHVQLISIGSSFEGRDIPALRVGVRPANDPKPRKTVIIGGGSHAREWIGVSTVNYVAYSLITTYGKSTPISTLLEQFDFIFIPTINPDGYVHTWETDRLWRKNRQETSLPFCPGVDLDRTWGFEWNGNATGDNPCSESYGGDEPFAGTEARQLAGWVKEQTEQHNVKFVAYLDLHSYSQQVLYPYSYSCLPRPPNLENLEELAMGIAKAIRLTNRQSYTVSSACQGFTASQKKVKLDTFPRMESTGGSALDWFYNDVGVKYSYQLKLRDKGSYGFLLPRENIVPTGKEVFNAVMVLAKFLLGSDGFEGLNWEAEFQRLNEADKPILDDGDDDEEEDGQDKKDDSWIPDEYKNDNDHDDDDDGWGLRRRRKR.

A signal peptide spans 1-21 (MRQFTHGTLLAILALANTISA). A propeptide spanning residues 22–174 (IPSFSANNYP…QTVYESYPSS (153 aa)) is cleaved from the precursor. Residues 170–179 (SYPSSSQRPT) show a composition bias toward polar residues. The segment at 170–191 (SYPSSSQRPTDNGRGFLPSRES) is disordered. Residues 202–521 (DYQPLSVIGP…NAVMVLAKFL (320 aa)) form the Peptidase M14 domain. Residues histidine 264 and glutamate 267 each coordinate Zn(2+). Substrate contacts are provided by residues 264 to 267 (HARE), arginine 322, and 339 to 340 (DR). The cysteines at positions 333 and 356 are disulfide-linked. An N-linked (GlcNAc...) asparagine glycan is attached at asparagine 349. Zn(2+) is bound at residue histidine 396. 397 to 398 (SY) is a substrate binding site. The segment at 542–592 (ADKPILDDGDDDEEEDGQDKKDDSWIPDEYKNDNDHDDDDDGWGLRRRRKR) is disordered. Positions 548 to 558 (DDGDDDEEEDG) are enriched in acidic residues. The segment covering 559–575 (QDKKDDSWIPDEYKNDN) has biased composition (basic and acidic residues).

This sequence belongs to the peptidase M14 family. It depends on Zn(2+) as a cofactor.

The protein resides in the vacuole. It is found in the secreted. Functionally, inactive carboxypeptidase that may play a role in cell wall organization and biogenesis. The sequence is that of Inactive metallocarboxypeptidase ECM14 (ECM14) from Ajellomyces dermatitidis (strain ER-3 / ATCC MYA-2586) (Blastomyces dermatitidis).